A 362-amino-acid polypeptide reads, in one-letter code: Tyrosine recombinase XerH (362 aa).

The Core-binding (CB) domain occupies 43–140; sequence ECLNELNQAC…ALLGLFSYID (98 aa). A Tyr recombinase domain is found at 170–357; it reads KLPTHLNNEE…DKQRLEEAAS (188 aa). Active-site residues include Arg-213, Lys-239, His-309, Arg-312, and His-335. The active-site O-(3'-phospho-DNA)-tyrosine intermediate is Tyr-344.

This sequence belongs to the 'phage' integrase family. XerH subfamily.

It localises to the cytoplasm. FtsK is required for recombination. Site-specific tyrosine recombinase, which acts by catalyzing the cutting and rejoining of the recombining DNA molecules. Involved in chromosome segregation. May contribute to chromosome decatenation. This is Tyrosine recombinase XerH from Helicobacter pylori (strain ATCC 700392 / 26695) (Campylobacter pylori).